The primary structure comprises 548 residues: C2H2-type transcription factor MSN2 (548 aa).

2 consecutive C2H2-type zinc fingers follow at residues 420–448 (FKCE…QDKP) and 449–471 (FECN…ARTH).

In terms of assembly, interacts with HOG1/OSM1.

The protein localises to the nucleus. Its subcellular location is the cytoplasm. Its function is as follows. Transcription factor that acts as a key downstream transcription factor in the HOG1-MAPK pathway. Regulates the expression of a series of downstream genes and controls vegetative growth, conidiogenesis, cell wall integrity, stress response, mitochondrial morphology, and pathogenicity. Binds to a putative promoter region 1500 bp upstream of the start codons of the target genes MGG_07019, POX1 and DCI1. Binds to the AGGGG and CCCCT motif of the COS1 promoter region. Involved in fatty acid beta-oxidation by directly regulating the expression of the dienoyl-CoA isomerase DCI1, thereby facilitating invasive hyphal growth during the early infection stage. Targets also the 3-methylglutaconyl-CoA hydratase-encoding gene (AUH1) to control mitochondrial morphology and mitophagy, which are critical for the infectious growth of the pathogen. The protein is C2H2-type transcription factor MSN2 of Pyricularia oryzae (strain 70-15 / ATCC MYA-4617 / FGSC 8958) (Rice blast fungus).